Reading from the N-terminus, the 153-residue chain is Ribosome maturation factor RimP (153 aa).

The protein belongs to the RimP family.

It localises to the cytoplasm. Required for maturation of 30S ribosomal subunits. The polypeptide is Ribosome maturation factor RimP (Actinobacillus pleuropneumoniae serotype 5b (strain L20)).